Here is a 161-residue protein sequence, read N- to C-terminus: GTP-dependent dephospho-CoA kinase (161 aa).

GTP-binding residues include Asp-40, Val-41, Val-42, Asp-59, Glu-112, and Glu-135.

The protein belongs to the GTP-dependent DPCK family.

It catalyses the reaction 3'-dephospho-CoA + GTP = GDP + CoA + H(+). It functions in the pathway cofactor biosynthesis; coenzyme A biosynthesis. Catalyzes the GTP-dependent phosphorylation of the 3'-hydroxyl group of dephosphocoenzyme A to form coenzyme A (CoA). The chain is GTP-dependent dephospho-CoA kinase from Methanocorpusculum labreanum (strain ATCC 43576 / DSM 4855 / Z).